A 436-amino-acid chain; its full sequence is GTPase Obg (436 aa).

In terms of domain architecture, Obg spans 2 to 160 (SMFLDTAKIK…RELQLELKIL (159 aa)). An OBG-type G domain is found at 161–338 (ADVGLVGFPS…LLDATAELLD (178 aa)). Residues 167–174 (GFPSVGKS), 192–196 (FTTIV), 214–217 (DLPG), 284–287 (NKMD), and 319–321 (SGL) each bind GTP. 2 residues coordinate Mg(2+): serine 174 and threonine 194. One can recognise an OCT domain in the interval 358–436 (GFDEEEKAFE…IGKFEFEFVD (79 aa)).

It belongs to the TRAFAC class OBG-HflX-like GTPase superfamily. OBG GTPase family. As to quaternary structure, monomer. Mg(2+) serves as cofactor.

The protein resides in the cytoplasm. Functionally, an essential GTPase which binds GTP, GDP and possibly (p)ppGpp with moderate affinity, with high nucleotide exchange rates and a fairly low GTP hydrolysis rate. Plays a role in control of the cell cycle, stress response, ribosome biogenesis and in those bacteria that undergo differentiation, in morphogenesis control. In Streptococcus pneumoniae (strain CGSP14), this protein is GTPase Obg.